An 88-amino-acid chain; its full sequence is UPF0250 protein Ssed_3490 (88 aa).

Belongs to the UPF0250 family.

The chain is UPF0250 protein Ssed_3490 from Shewanella sediminis (strain HAW-EB3).